The chain runs to 90 residues: NAD(P)H-quinone oxidoreductase subunit H, chloroplastic (90 aa).

It belongs to the complex I 49 kDa subunit family. In terms of assembly, NDH is composed of at least 16 different subunits, 5 of which are encoded in the nucleus.

It is found in the plastid. The protein resides in the chloroplast thylakoid membrane. It carries out the reaction a plastoquinone + NADH + (n+1) H(+)(in) = a plastoquinol + NAD(+) + n H(+)(out). It catalyses the reaction a plastoquinone + NADPH + (n+1) H(+)(in) = a plastoquinol + NADP(+) + n H(+)(out). Its function is as follows. NDH shuttles electrons from NAD(P)H:plastoquinone, via FMN and iron-sulfur (Fe-S) centers, to quinones in the photosynthetic chain and possibly in a chloroplast respiratory chain. The immediate electron acceptor for the enzyme in this species is believed to be plastoquinone. Couples the redox reaction to proton translocation, and thus conserves the redox energy in a proton gradient. The sequence is that of NAD(P)H-quinone oxidoreductase subunit H, chloroplastic (ndhH) from Secale cereale (Rye).